We begin with the raw amino-acid sequence, 283 residues long: Arylamine N-acetyltransferase (283 aa).

Catalysis depends on cysteine 70, which acts as the Acyl-thioester intermediate. Catalysis depends on residues histidine 110 and aspartate 127.

This sequence belongs to the arylamine N-acetyltransferase family. As to quaternary structure, homodimer and homotetramer.

The catalysed reaction is an arylamine + acetyl-CoA = an N-acetylarylamine + CoA. Functionally, catalyzes the transfer of the acetyl group from acetyl coenzyme A to the free amino group of arylamines and hydrazines. Is able to utilize not only acetyl-CoA, but also n-propionyl-CoA and acetoacetyl-CoA as acyl donors, although at a lower rate. As acetyl-CoA and propionyl-CoA are products of cholesterol catabolism and the nat gene is likely present in the same operon than genes involved in cholesterol degradation, this enzyme could have a role in the utilization and regulation of these CoA species. The polypeptide is Arylamine N-acetyltransferase (nat) (Mycobacterium bovis (strain ATCC BAA-935 / AF2122/97)).